Consider the following 505-residue polypeptide: RNA-splicing ligase RtcB homolog (505 aa).

Positions 119, 122, 227, and 259 each coordinate Mn(2+). 226–230 (NHYAE) contributes to the GMP binding site. S300 carries the phosphoserine modification. Mn(2+) is bound at residue H353. GMP contacts are provided by residues 353–354 (HN), 402–405 (GGTM), S409, and 428–431 (HGAG). H428 acts as the GMP-histidine intermediate in catalysis. K496 participates in a covalent cross-link: Glycyl lysine isopeptide (Lys-Gly) (interchain with G-Cter in SUMO2). K504 provides a ligand contact to GMP.

Belongs to the RtcB family. In terms of assembly, catalytic component of the tRNA-splicing ligase complex. Mn(2+) serves as cofactor.

It is found in the nucleus. It localises to the cytoplasm. The enzyme catalyses a 3'-end 3'-phospho-ribonucleotide-RNA + a 5'-end dephospho-ribonucleoside-RNA + GTP = a ribonucleotidyl-ribonucleotide-RNA + GMP + diphosphate. It catalyses the reaction a 3'-end 2',3'-cyclophospho-ribonucleotide-RNA + a 5'-end dephospho-ribonucleoside-RNA + GTP + H2O = a ribonucleotidyl-ribonucleotide-RNA + GMP + diphosphate + H(+). Its function is as follows. Catalytic subunit of the tRNA-splicing ligase complex that acts by directly joining spliced tRNA halves to mature-sized tRNAs by incorporating the precursor-derived splice junction phosphate into the mature tRNA as a canonical 3',5'-phosphodiester. May act as an RNA ligase with broad substrate specificity, and may function toward other RNAs. The polypeptide is RNA-splicing ligase RtcB homolog (Bos taurus (Bovine)).